We begin with the raw amino-acid sequence, 104 residues long: L-rhamnose mutarotase (104 aa).

Position 18 (Tyr-18) interacts with substrate. The active-site Proton donor is the His-22. Residues Tyr-41 and 76-77 (WW) each bind substrate.

This sequence belongs to the rhamnose mutarotase family. As to quaternary structure, homodimer.

It is found in the cytoplasm. The catalysed reaction is alpha-L-rhamnose = beta-L-rhamnose. It functions in the pathway carbohydrate metabolism; L-rhamnose metabolism. Functionally, involved in the anomeric conversion of L-rhamnose. The sequence is that of L-rhamnose mutarotase from Escherichia coli O8 (strain IAI1).